The sequence spans 342 residues: Phosphoribosylformylglycinamidine cyclo-ligase (342 aa).

The protein belongs to the AIR synthase family.

The protein resides in the cytoplasm. The catalysed reaction is 2-formamido-N(1)-(5-O-phospho-beta-D-ribosyl)acetamidine + ATP = 5-amino-1-(5-phospho-beta-D-ribosyl)imidazole + ADP + phosphate + H(+). It participates in purine metabolism; IMP biosynthesis via de novo pathway; 5-amino-1-(5-phospho-D-ribosyl)imidazole from N(2)-formyl-N(1)-(5-phospho-D-ribosyl)glycinamide: step 2/2. This chain is Phosphoribosylformylglycinamidine cyclo-ligase, found in Staphylococcus aureus (strain USA300).